The chain runs to 602 residues: ATP-dependent DNA helicase II subunit 1 (602 aa).

A Ku domain is found at 268–483 (FQCPLILDEK…YDNMKKVTQS (216 aa)). Serine 370, serine 371, and serine 372 each carry phosphoserine.

It belongs to the ku70 family. Heterodimer of YKU70/HDF1 and YKU80/HDF2. Sumoylated by MMS21.

It is found in the nucleus. The protein resides in the chromosome. The protein localises to the telomere. The catalysed reaction is ATP + H2O = ADP + phosphate + H(+). In terms of biological role, single-stranded DNA-dependent ATP-dependent helicase. Involved in non-homologous end joining (NHEJ) DNA double strand break repair. DNA-binding is sequence-independent but has a high affinity to nicks in double-stranded DNA and to the ends of duplex DNA. Binds to naturally occurring chromosomal ends, and therefore provides chromosomal end protection. Appears to have a role in recruitment of telomerase and CDC13 to the telomere and the subsequent telomere elongation. Required also for telomere recombination to repair telomeric ends in the absence of telomerase. KU70, of the KU70/KU80 heterodimer, binds to the stem loop of TLC1, the RNA component of telomerase. Involved in telomere maintenance. Interacts with telomeric repeats and subtelomeric sequences thereby controlling telomere length and protecting against subtelomeric rearrangement. Maintains telomeric chromatin, which is involved in silencing the expression of genes located at the telomere. Required for mating-type switching. The chain is ATP-dependent DNA helicase II subunit 1 (YKU70) from Saccharomyces cerevisiae (strain ATCC 204508 / S288c) (Baker's yeast).